Reading from the N-terminus, the 327-residue chain is tRNA uridine(34) hydroxylase (327 aa).

In terms of domain architecture, Rhodanese spans 130-224 (LDEDTVVLDT…YGKDPEVQGE (95 aa)). Catalysis depends on Cys-184, which acts as the Cysteine persulfide intermediate.

It belongs to the TrhO family.

It catalyses the reaction uridine(34) in tRNA + AH2 + O2 = 5-hydroxyuridine(34) in tRNA + A + H2O. Its function is as follows. Catalyzes oxygen-dependent 5-hydroxyuridine (ho5U) modification at position 34 in tRNAs. This Streptococcus thermophilus (strain CNRZ 1066) protein is tRNA uridine(34) hydroxylase.